Reading from the N-terminus, the 284-residue chain is Tropomyosin (284 aa).

A coiled-coil region spans residues M1–Y284. A disordered region spans residues R105 to E131.

This sequence belongs to the tropomyosin family. In terms of assembly, homodimer.

Functionally, tropomyosin, in association with the troponin complex, plays a central role in the calcium dependent regulation of muscle contraction. This chain is Tropomyosin, found in Cornu aspersum (Brown garden snail).